The sequence spans 362 residues: Ribosome-binding ATPase YchF (362 aa).

The OBG-type G domain maps to 3–255; the sequence is FKCGIIGLPN…MNEDEQKYFM (253 aa). Residue 12 to 17 participates in ATP binding; that stretch reads NVGKST. Residues serine 16 and threonine 36 each coordinate Mg(2+). The TGS domain maps to 277 to 360; it reads NLITFFTAGI…QDGDIINFLF (84 aa).

This sequence belongs to the TRAFAC class OBG-HflX-like GTPase superfamily. OBG GTPase family. YchF/OLA1 subfamily. Requires Mg(2+) as cofactor.

ATPase that binds to both the 70S ribosome and the 50S ribosomal subunit in a nucleotide-independent manner. This chain is Ribosome-binding ATPase YchF, found in Buchnera aphidicola subsp. Schizaphis graminum (strain Sg).